A 215-amino-acid chain; its full sequence is Thymidylate kinase (215 aa).

10–17 serves as a coordination point for ATP; that stretch reads GGEGVGKT.

This sequence belongs to the thymidylate kinase family.

The catalysed reaction is dTMP + ATP = dTDP + ADP. In terms of biological role, phosphorylation of dTMP to form dTDP in both de novo and salvage pathways of dTTP synthesis. In Bartonella henselae (strain ATCC 49882 / DSM 28221 / CCUG 30454 / Houston 1) (Rochalimaea henselae), this protein is Thymidylate kinase.